The sequence spans 147 residues: UPF0178 protein CV_1768 (147 aa).

This sequence belongs to the UPF0178 family.

This is UPF0178 protein CV_1768 from Chromobacterium violaceum (strain ATCC 12472 / DSM 30191 / JCM 1249 / CCUG 213 / NBRC 12614 / NCIMB 9131 / NCTC 9757 / MK).